Here is a 355-residue protein sequence, read N- to C-terminus: Acyl-CoA desaturase 1 (355 aa).

Over 1–68 the chain is Cytoplasmic; sequence MPAHMLQEIS…EGPPPKLEYV (68 aa). A compositionally biased stretch (low complexity) spans 9 to 20; the sequence is ISSSYTTTTTIT. The interval 9–33 is disordered; it reads ISSSYTTTTTITAPPSGNEREKVKT. The chain crosses the membrane as a helical span at residues 69–89; sequence WRNIILMVLLHLGGLYGIILV. Asn71 serves as a coordination point for substrate. Over 90-93 the chain is Lumenal; the sequence is PSCK. A helical membrane pass occupies residues 94-114; that stretch reads LYTCLFGIFYYMTSALGITAG. The Cytoplasmic segment spans residues 115 to 213; sequence AHRLWSHRTY…EKLVMFQRRY (99 aa). Residues His116 and His121 each contribute to the Fe cation site. Residues 116–121 carry the Histidine box-1 motif; it reads HRLWSH. Residues Asn144, Arg151, and Asp152 each contribute to the substrate site. Positions 153, 156, and 157 each coordinate Fe cation. The Histidine box-2 signature appears at 153–157; that stretch reads HRAHH. The substrate site is built by Arg184 and Lys185. A helical transmembrane segment spans residues 214-233; sequence YKPGLLLMCFILPTLVPWYC. Over 234–237 the chain is Lumenal; sequence WGET. A helical transmembrane segment spans residues 238-259; it reads FVNSLFVSTFLRYTLVLNATWL. Substrate is bound at residue Trp258. At 260–355 the chain is on the cytoplasmic side; it reads VNSAAHLYGY…RTGDGSHKSS (96 aa). 4 residues coordinate Fe cation: His265, His294, His297, and His298. Positions 294 to 298 match the Histidine box-3 motif; the sequence is HNYHH.

The protein belongs to the fatty acid desaturase type 1 family. Fe(2+) serves as cofactor. Detected in liver (at protein level). Detected in skin and liver. Detected in sebaceous gland, but not in hair follicle. Detected in white and brown adipose tissue, eyelid, Harderian gland, and at lower levels in Meibomian gland, eyeball and adrenal gland. Highly expressed in liver, and detected at low levels in brain, heart, lung, stomach, skeletal muscle and kidney.

Its subcellular location is the endoplasmic reticulum membrane. It is found in the microsome membrane. The enzyme catalyses octadecanoyl-CoA + 2 Fe(II)-[cytochrome b5] + O2 + 2 H(+) = (9Z)-octadecenoyl-CoA + 2 Fe(III)-[cytochrome b5] + 2 H2O. Stearoyl-CoA desaturase that utilizes O(2) and electrons from reduced cytochrome b5 to introduce the first double bond into saturated fatty acyl-CoA substrates. Catalyzes the insertion of a cis double bond at the Delta-9 position into fatty acyl-CoA substrates including palmitoyl-CoA and stearoyl-CoA. Gives rise to a mixture of 16:1 and 18:1 unsaturated fatty acids. Plays an important role in lipid biosynthesis. Plays an important role in regulating the expression of genes that are involved in lipogenesis and in regulating mitochondrial fatty acid oxidation. Plays an important role in body energy homeostasis. Contributes to the biosynthesis of membrane phospholipids, cholesterol esters and triglycerides. Required for normal development of sebaceous glands. Required for the biosynthesis of normal levels of Delta-9 unsaturated fatty acids and 1-alkyl-2,3-diacylglycerol in the Harderian gland. Required for normal production of meibum, an oily material that prevents drying of the cornea. In Mus musculus (Mouse), this protein is Acyl-CoA desaturase 1 (Scd1).